The primary structure comprises 424 residues: Serine--tRNA ligase (424 aa).

An L-serine-binding site is contributed by 228 to 230 (TAE). Residue 259–261 (RSE) coordinates ATP. Glu-282 is an L-serine binding site. Residue 346–349 (EISS) participates in ATP binding. Ser-382 contributes to the L-serine binding site.

The protein belongs to the class-II aminoacyl-tRNA synthetase family. Type-1 seryl-tRNA synthetase subfamily. As to quaternary structure, homodimer. The tRNA molecule binds across the dimer.

Its subcellular location is the cytoplasm. It catalyses the reaction tRNA(Ser) + L-serine + ATP = L-seryl-tRNA(Ser) + AMP + diphosphate + H(+). It carries out the reaction tRNA(Sec) + L-serine + ATP = L-seryl-tRNA(Sec) + AMP + diphosphate + H(+). The protein operates within aminoacyl-tRNA biosynthesis; selenocysteinyl-tRNA(Sec) biosynthesis; L-seryl-tRNA(Sec) from L-serine and tRNA(Sec): step 1/1. Its function is as follows. Catalyzes the attachment of serine to tRNA(Ser). Is also able to aminoacylate tRNA(Sec) with serine, to form the misacylated tRNA L-seryl-tRNA(Sec), which will be further converted into selenocysteinyl-tRNA(Sec). The polypeptide is Serine--tRNA ligase (Rhodospirillum centenum (strain ATCC 51521 / SW)).